The sequence spans 158 residues: RNA pyrophosphohydrolase (158 aa).

The 145-residue stretch at 8-152 (PYRPCAGVML…KRALYRGLIE (145 aa)) folds into the Nudix hydrolase domain. The Nudix box motif lies at 42-63 (GGIDEGEDAEKAAIRELGEETG).

Belongs to the Nudix hydrolase family. RppH subfamily. It depends on a divalent metal cation as a cofactor.

Functionally, accelerates the degradation of transcripts by removing pyrophosphate from the 5'-end of triphosphorylated RNA, leading to a more labile monophosphorylated state that can stimulate subsequent ribonuclease cleavage. The chain is RNA pyrophosphohydrolase from Sphingopyxis alaskensis (strain DSM 13593 / LMG 18877 / RB2256) (Sphingomonas alaskensis).